Here is a 758-residue protein sequence, read N- to C-terminus: 5-methyltetrahydropteroyltriglutamate--homocysteine methyltransferase (758 aa).

5-methyltetrahydropteroyltri-L-glutamate contacts are provided by residues 16-19 (RELK) and lysine 116. L-homocysteine is bound by residues 436-438 (IGS) and glutamate 489. L-methionine is bound by residues 436–438 (IGS) and glutamate 489. 5-methyltetrahydropteroyltri-L-glutamate is bound by residues 520 to 521 (RC) and tryptophan 566. An L-homocysteine-binding site is contributed by aspartate 604. Aspartate 604 contacts L-methionine. Residue glutamate 610 participates in 5-methyltetrahydropteroyltri-L-glutamate binding. The Zn(2+) site is built by histidine 646, cysteine 648, and glutamate 670. Histidine 699 functions as the Proton donor in the catalytic mechanism. Cysteine 731 is a Zn(2+) binding site.

The protein belongs to the vitamin-B12 independent methionine synthase family. Requires Zn(2+) as cofactor.

It catalyses the reaction 5-methyltetrahydropteroyltri-L-glutamate + L-homocysteine = tetrahydropteroyltri-L-glutamate + L-methionine. It functions in the pathway amino-acid biosynthesis; L-methionine biosynthesis via de novo pathway; L-methionine from L-homocysteine (MetE route): step 1/1. Its function is as follows. Catalyzes the transfer of a methyl group from 5-methyltetrahydrofolate to homocysteine resulting in methionine formation. This chain is 5-methyltetrahydropteroyltriglutamate--homocysteine methyltransferase, found in Xylella fastidiosa (strain M23).